The following is a 157-amino-acid chain: UPF0251 protein CLD_3165 (157 aa).

It belongs to the UPF0251 family.

The polypeptide is UPF0251 protein CLD_3165 (Clostridium botulinum (strain Okra / Type B1)).